We begin with the raw amino-acid sequence, 927 residues long: Dual serine/threonine and tyrosine protein kinase (927 aa).

Residues 1 to 21 (MEADGQSWAGESVSGPGPGGG) are disordered. A coiled-coil region spans residues 393–429 (RKKENELYESLMNIANRKQEEMKDMIVETLNTMKEEL). The 255-residue stretch at 650–904 (PKLGQELGRG…PLLGIVQPML (255 aa)) folds into the Protein kinase domain. Residues 656-664 (LGRGQYGVV) and Lys-679 contribute to the ATP site. The active-site Proton acceptor is Asp-775.

This sequence belongs to the protein kinase superfamily. Ser/Thr protein kinase family. Expressed in brain, heart, skeletal muscle, kidney and lung. Expressed in maturing tubular epithelia, with the most prominent expression in the medulla and the papilla. Expressed in thin ascending limb of the loop of Henle and the distal convoluted tubule. Expressed in all layers of transitional ureteric epithelium and in the ureteric smooth-muscle cells (at protein level). Widely expressed. Highly expressed in many brain regions, including in cerebellum, olfactory, hippocampus and cerebral cortex.

It is found in the cytoplasm. The protein resides in the cell membrane. Its subcellular location is the apical cell membrane. The protein localises to the basolateral cell membrane. It localises to the cell junction. It catalyses the reaction L-seryl-[protein] + ATP = O-phospho-L-seryl-[protein] + ADP + H(+). The catalysed reaction is L-threonyl-[protein] + ATP = O-phospho-L-threonyl-[protein] + ADP + H(+). The enzyme catalyses L-tyrosyl-[protein] + ATP = O-phospho-L-tyrosyl-[protein] + ADP + H(+). Acts as a positive regulator of ERK phosphorylation downstream of fibroblast growth factor-receptor activation. Involved in the regulation of both caspase-dependent apoptosis and caspase-independent cell death. In the skin, it plays a predominant role in suppressing caspase-dependent apoptosis in response to UV stress in a range of dermal cell types. The sequence is that of Dual serine/threonine and tyrosine protein kinase (Dstyk) from Mus musculus (Mouse).